Here is a 334-residue protein sequence, read N- to C-terminus: Sterol 4-C-methyltransferase strm-1 (334 aa).

Belongs to the class I-like SAM-binding methyltransferase superfamily. Erg6/SMT family. As to expression, expressed in the pharynx and hypodermal syncytium.

The catalysed reaction is 5alpha-cholest-7-en-3-one + S-adenosyl-L-methionine = 4alpha-methyl-5alpha-cholest-7-en-3-one + S-adenosyl-L-homocysteine + H(+). Its pathway is steroid hormone biosynthesis; dafachronic acid biosynthesis. Its function is as follows. Catalyzes the methyl transfer from S-adenosyl-methionine to the C-4 of the A-ring sterols such as lathosterone (5alpha-cholest-7-en-3-one) thereby rendering them unsuitable as ligand precursors. May irreversibly shunt sterols away from hormone dafachronic acid production. Dafachronic acids act as ligands and bind directly to the nuclear hormone receptor (NHR) daf-12 suppressing dauer formation and inducing reproductive growth. By reducing the biosynthesis of dafachronic acids, this methyltransferase can regulate dauer larva formation. The sequence is that of Sterol 4-C-methyltransferase strm-1 (strm-1) from Caenorhabditis elegans.